A 302-amino-acid chain; its full sequence is Coenzyme PQQ synthesis protein B (302 aa).

This sequence belongs to the PqqB family.

Its pathway is cofactor biosynthesis; pyrroloquinoline quinone biosynthesis. In terms of biological role, may be involved in the transport of PQQ or its precursor to the periplasm. The polypeptide is Coenzyme PQQ synthesis protein B (Azotobacter vinelandii (strain DJ / ATCC BAA-1303)).